A 182-amino-acid polypeptide reads, in one-letter code: Lipoprotein signal peptidase (182 aa).

The next 3 membrane-spanning stretches (helical) occupy residues 12–32 (VAVFACVAAAALIVDQLTKAW), 68–88 (ATWVISLLAVVACVALAVAGV), and 91–111 (VSMKWSVAISFAFAGALGNLI). Active-site residues include aspartate 127 and aspartate 140. Residues 135-155 (VGNVADIYLVVAGVVLVILIL) traverse the membrane as a helical segment.

It belongs to the peptidase A8 family.

Its subcellular location is the cell membrane. The catalysed reaction is Release of signal peptides from bacterial membrane prolipoproteins. Hydrolyzes -Xaa-Yaa-Zaa-|-(S,diacylglyceryl)Cys-, in which Xaa is hydrophobic (preferably Leu), and Yaa (Ala or Ser) and Zaa (Gly or Ala) have small, neutral side chains.. It participates in protein modification; lipoprotein biosynthesis (signal peptide cleavage). In terms of biological role, this protein specifically catalyzes the removal of signal peptides from prolipoproteins. The polypeptide is Lipoprotein signal peptidase (Bifidobacterium longum (strain DJO10A)).